Reading from the N-terminus, the 425-residue chain is Putative chloroquine resistance transporter (425 aa).

Residues 1-56 (MTGIKKGKNKKKNMKNDDRYKELDSLITNGSEIGNNSGRSCVKRFFKIIGNEMKNN) are Cytoplasmic-facing. A helical membrane pass occupies residues 57-77 (VYVYLLSILYLCVCVMNKVFA). The Vacuolar segment spans residues 78–88 (KRTLNKMGNYS). An N-linked (GlcNAc...) asparagine glycan is attached at asparagine 86. A helical transmembrane segment spans residues 89-109 (FVTSETHNIICIIVFQLLYFI). Over 110-126 (YRKTSSSSVYKNESQKN) the chain is Cytoplasmic. The helical transmembrane segment at 127–147 (FGWQFFLISLLDASTVIISMI) threads the bilayer. The Vacuolar portion of the chain corresponds to 148-157 (GLTRTTGNIQ). The helical transmembrane segment at 158 to 178 (SFIMQLIIPVNMYFWFMFLGY) threads the bilayer. Over 179-181 (RYH) the chain is Cytoplasmic. The helical transmembrane segment at 182-202 (LFNYLGAFIILITIAVVETFL) threads the bilayer. The Vacuolar portion of the chain corresponds to 203-210 (SFETQGEN). The helical transmembrane segment at 211-231 (SIIFNLIMISAFNTLSFSNMT) threads the bilayer. Topologically, residues 232 to 249 (REVVFKKHKINILRLNAM) are cytoplasmic. A helical membrane pass occupies residues 250–270 (VVLFQFFTSLLVLPVYNIPFL). The Vacuolar segment spans residues 271 to 318 (KEIYMPFSEMSTNINNGLRCLFYGENTIVENCGVGMVKMCDNCEGAWK). 2 disulfide bridges follow: cysteine 290-cysteine 313 and cysteine 302-cysteine 310. The chain crosses the membrane as a helical span at residues 319-339 (TFITFSFFNICDNLLACYIID). At 340-347 (KFSTMTYT) the chain is on the cytoplasmic side. Residues 348-368 (IVSCIQGPAITIAYYFKFLAG) form a helical membrane-spanning segment. The Vacuolar segment spans residues 369 to 378 (DAVRKPRILD). Residues 379 to 399 (FLTLFGYLFGTIIYRIGNIIL) form a helical membrane-spanning segment. Topologically, residues 400-425 (EKKQVIKSQNSNDSEAELTSIETSRA) are cytoplasmic.

Belongs to the CRT-like transporter family.

The protein resides in the vacuole membrane. In terms of biological role, nutrient transporter. Involved in maintaining the osmotic homeostasis of the digestive vacuole. The protein is Putative chloroquine resistance transporter of Plasmodium berghei.